A 223-amino-acid chain; its full sequence is MIF4G domain-containing protein A (223 aa).

In terms of domain architecture, MIF4G spans 7-206 (QEDYKMQAFD…LEMIEYRAAG (200 aa)).

The protein belongs to the MIF4GD family. In terms of assembly, interacts with eif4g1, eif4g2 and slbp; probably tethered by SLBP to the 3'-end of mRNAs ending with the histone stem-loop, it also interacts with eif4g1 which is bound to their 5'-end.

It localises to the cytoplasm. It is found in the nucleus. Functionally, functions in replication-dependent translation of histone mRNAs which differ from other eukaryotic mRNAs in that they do not end with a poly-A tail but a stem-loop. May participate in circularizing those mRNAs specifically enhancing their translation. In Xenopus laevis (African clawed frog), this protein is MIF4G domain-containing protein A (mif4gd-a).